Here is a 412-residue protein sequence, read N- to C-terminus: Glutamate dehydrogenase (412 aa).

Residue Lys-102 is part of the active site.

This sequence belongs to the Glu/Leu/Phe/Val dehydrogenases family. In terms of tissue distribution, in roots, stems, leaves and flowers but not in fruits.

The protein localises to the mitochondrion matrix. It carries out the reaction L-glutamate + NAD(+) + H2O = 2-oxoglutarate + NH4(+) + NADH + H(+). It catalyses the reaction L-glutamate + NADP(+) + H2O = 2-oxoglutarate + NH4(+) + NADPH + H(+). The polypeptide is Glutamate dehydrogenase (GDH1) (Solanum lycopersicum (Tomato)).